A 759-amino-acid chain; its full sequence is LON peptidase N-terminal domain and RING finger protein 3 (759 aa).

The disordered stretch occupies residues 1–69 (MESVRIEQML…PGTSTPESKV (69 aa)). Positions 57–66 (EQSPGTSTPE) are enriched in polar residues. One copy of the TPR 1 repeat lies at 67-100 (SKVLLTQADALASRGRIREALEVYRQLSERQQLV). Residues 158–196 (CRKCHGFLSDPVSLSCGHTFCKLCLERGRAADRRCALCG) form an RING-type 1 zinc finger. TPR repeat units follow at residues 243–276 (ASQL…APND), 278–310 (LLYS…RPMG), and 312–344 (KAHF…DGKN). The segment at 360 to 454 (HCSSQEEAAA…TDQGDKPALS (95 aa)) is disordered. Residues 380-393 (AKVKGDGQQHHMKD) show a composition bias toward basic and acidic residues. The RING-type 2 zinc finger occupies 467 to 505 (CALCMRLFYEPVTTPCGHTFCLKCLERCLDHNAKCPLCK). The region spanning 546–755 (MEELSNLNKN…GIRRVLAFIS (210 aa)) is the Lon N-terminal domain.

The polypeptide is LON peptidase N-terminal domain and RING finger protein 3 (LONRF3) (Homo sapiens (Human)).